The chain runs to 310 residues: Probable L,D-transpeptidase ErfK/SrfK (310 aa).

The N-terminal stretch at 1-21 (MRRVNILCSFALLFASHTSLA) is a signal peptide. The L,D-TPase catalytic domain maps to 96–231 (KGIVVNVAEM…VPVGTRVQII (136 aa)). H191 acts as the Proton donor/acceptor in catalysis. Residue C207 is the Nucleophile of the active site.

Belongs to the YkuD family. As to quaternary structure, interacts with DsbG.

The protein resides in the periplasm. Its pathway is cell wall biogenesis; peptidoglycan biosynthesis. In terms of biological role, responsible, at least in part, for anchoring of the major outer membrane lipoprotein (Lpp, also known as the Braun lipoprotein) to the peptidoglycan via a meso-diaminopimelyl-L-Lys- bond on the terminal residue of Lpp. This is Probable L,D-transpeptidase ErfK/SrfK (erfK) from Escherichia coli (strain K12).